The following is a 150-amino-acid chain: MNTCIQLLILCLVTVINSENSTDHSTENTIENETEDVTKTELLKTIENETENVIETELPETVETEIQTEALNLPQSPEQRYCRSKGQYCSRTYFHRCCGNLVCQLHGFFNGTCVDCLAERKFCIWSSECCSGRCRLFRCRKNTHVKVIHY.

Residues 1-18 (MNTCIQLLILCLVTVINS) form the signal peptide. 4 N-linked (GlcNAc...) asparagine glycosylation sites follow: Asn20, Asn32, Asn48, and Asn110. Disulfide bonds link Cys116–Cys130, Cys123–Cys134, and Cys129–Cys139.

This sequence belongs to the UPF0506 family.

The protein resides in the secreted. The chain is UPF0506 protein SJCHGC09643 from Schistosoma japonicum (Blood fluke).